The sequence spans 886 residues: Cytosolic carboxypeptidase-like protein 5 (886 aa).

The 414-residue stretch at 157-570 (YPFSYSDCQE…AMAIAALDMA (414 aa)) folds into the Peptidase M14 domain. Positions 252 and 255 each coordinate Zn(2+). Low complexity predominate over residues 344–354 (SQSSSEHQPSS). The interval 344 to 364 (SQSSSEHQPSSCLPPDAPVSD) is disordered. Residue His434 participates in Zn(2+) binding. Glu516 acts as the Proton donor/acceptor in catalysis. 2 disordered regions span residues 605 to 734 (STLN…SSHK) and 784 to 848 (LQAR…FSPI). Residues 631–640 (CSENTLSRAR) show a composition bias toward polar residues. The segment covering 641-666 (SFSTGTSAGGSSSSQQNSPQMKNSPS) has biased composition (low complexity). The span at 696–705 (REPRSQDRRR) shows a compositional bias: basic and acidic residues. Low complexity predominate over residues 714–732 (PAGSLAPSPAPTSSGPASS). Ser841 carries the post-translational modification Phosphoserine.

The protein belongs to the peptidase M14 family. It depends on Zn(2+) as a cofactor. In terms of tissue distribution, expressed in brain.

It localises to the cytoplasm. The protein resides in the cytosol. The protein localises to the nucleus. Its subcellular location is the cytoskeleton. It is found in the spindle. It localises to the midbody. It carries out the reaction gamma-L-glutamyl-L-glutamyl-[protein] + H2O = L-glutamyl-[protein] + L-glutamate. It catalyses the reaction (L-glutamyl)(n+1)-gamma-L-glutamyl-L-glutamyl-[protein] + H2O = (L-glutamyl)(n)-gamma-L-glutamyl-L-glutamyl-[protein] + L-glutamate. The enzyme catalyses C-terminal L-alpha-aminoacyl-L-glutamyl-[tubulin] + H2O = C-terminal L-alpha-aminoacyl-[tubulin] + L-glutamate. The catalysed reaction is C-terminal L-alpha-aminoacyl-L-glutamyl-L-glutamyl-[tubulin] + H2O = C-terminal L-alpha-aminoacyl-L-glutamyl-[tubulin] + L-glutamate. In terms of biological role, metallocarboxypeptidase that mediates deglutamylation of tubulin and non-tubulin target proteins. Catalyzes the removal of polyglutamate side chains present on the gamma-carboxyl group of glutamate residues within the C-terminal tail of alpha- and beta-tubulin. Cleaves alpha- and gamma-linked polyglutamate tubulin side-chain, as well as the branching point glutamate. Also catalyzes the removal of alpha-linked glutamate residues from the carboxy-terminus of alpha-tubulin. Mediates deglutamylation of nucleotidyltransferase CGAS, leading to CGAS antiviral defense response activation. The polypeptide is Cytosolic carboxypeptidase-like protein 5 (Homo sapiens (Human)).